The following is a 477-amino-acid chain: Cobyric acid synthase (477 aa).

One can recognise a GATase cobBQ-type domain in the interval 248 to 432 (GLHIACPMLS…LHGLFSGDGF (185 aa)). Cysteine 330 acts as the Nucleophile in catalysis. The active site involves histidine 424.

The protein belongs to the CobB/CobQ family. CobQ subfamily.

It participates in cofactor biosynthesis; adenosylcobalamin biosynthesis. Catalyzes amidations at positions B, D, E, and G on adenosylcobyrinic A,C-diamide. NH(2) groups are provided by glutamine, and one molecule of ATP is hydrogenolyzed for each amidation. The polypeptide is Cobyric acid synthase (Paracoccus denitrificans (strain Pd 1222)).